The chain runs to 180 residues: Sec-independent protein translocase protein TatB (180 aa).

A helical transmembrane segment spans residues 1–21 (MFDIGWSELLVIGVVALIAIG). The interval 77-180 (TRGDLMTRLT…DQTARGAKAS (104 aa)) is disordered. Positions 105–129 (ADKPSVSSDAASASGSAAPEAGAAE) are enriched in low complexity.

This sequence belongs to the TatB family. As to quaternary structure, the Tat system comprises two distinct complexes: a TatABC complex, containing multiple copies of TatA, TatB and TatC subunits, and a separate TatA complex, containing only TatA subunits. Substrates initially bind to the TatABC complex, which probably triggers association of the separate TatA complex to form the active translocon.

The protein resides in the cell inner membrane. Its function is as follows. Part of the twin-arginine translocation (Tat) system that transports large folded proteins containing a characteristic twin-arginine motif in their signal peptide across membranes. Together with TatC, TatB is part of a receptor directly interacting with Tat signal peptides. TatB may form an oligomeric binding site that transiently accommodates folded Tat precursor proteins before their translocation. The protein is Sec-independent protein translocase protein TatB of Nitrobacter winogradskyi (strain ATCC 25391 / DSM 10237 / CIP 104748 / NCIMB 11846 / Nb-255).